Consider the following 314-residue polypeptide: Ribosomal protein uL3 glutamine methyltransferase (314 aa).

The protein belongs to the protein N5-glutamine methyltransferase family. PrmB subfamily.

The enzyme catalyses L-glutaminyl-[ribosomal protein uL3] + S-adenosyl-L-methionine = N(5)-methyl-L-glutaminyl-[ribosomal protein uL3] + S-adenosyl-L-homocysteine + H(+). In terms of biological role, methylates large ribosomal subunit protein uL3 on a specific glutamine residue. The polypeptide is Ribosomal protein uL3 glutamine methyltransferase (Francisella tularensis subsp. tularensis (strain SCHU S4 / Schu 4)).